We begin with the raw amino-acid sequence, 371 residues long: Leu/Ile/Val-binding protein homolog 1 (371 aa).

Positions 1-23 (MRKTLFSGVALAAVIAFGGSAWA) are cleaved as a signal peptide.

It belongs to the leucine-binding protein family.

Component of an amino-acid transport system. In Brucella abortus (strain 2308), this protein is Leu/Ile/Val-binding protein homolog 1.